The sequence spans 837 residues: Striatin-interacting protein 1 (837 aa).

M1 bears the N-acetylmethionine mark. 2 disordered regions span residues 1–67 and 333–423; these read MEPA…ESPD and AASP…KGLP. Residues 18–35 show a composition bias toward pro residues; the sequence is PQPPPPPPPATAQPPPGA. A compositionally biased stretch (low complexity) spans 36-46; that stretch reads PRAAAGLLPGG. The span at 47 to 60 shows a compositional bias: basic and acidic residues; sequence KAREFNRNQRKDSE. Residues S59, S335, and S339 each carry the phosphoserine modification. Positions 333 to 343 are enriched in low complexity; sequence AASPPASASDS. The segment covering 356–377 has biased composition (basic and acidic residues); the sequence is KALIKQDNLDAFNERDPYKADD. Positions 378-391 are enriched in acidic residues; it reads SREEEEENDDDNSL. S788 bears the Phosphoserine mark. Positions 796–837 are required for STRIPAK core complex formation; the sequence is DNCLQSVLGQRVDLPEDFQMNYDLWLEREVFSKPISWEELLQ.

The protein belongs to the STRIP family. In terms of assembly, part of the core of STRIPAK complexes composed of PP2A catalytic and scaffolding subunits, the striatins (PP2A regulatory subunits), the striatin-associated proteins MOB4, STRIP1 and STRIP2, PDCD10 and members of the STE20 kinases, such as STK24 and STK26. The STRIPAK complex can be extended by adapter proteins such as SLMAP:SIKE1, CTTNBP2 or CTTNBP2NL. Interacts with CDC42BPB. Interacts with CTTNBP2NL.

The protein resides in the cytoplasm. In terms of biological role, plays a role in the regulation of cell morphology and cytoskeletal organization. Required in the cortical actin filament dynamics and cell shape. Part of the striatin-interacting phosphatase and kinase (STRIPAK) complexes. STRIPAK complexes have critical roles in protein (de)phosphorylation and are regulators of multiple signaling pathways including Hippo, MAPK, nuclear receptor and cytoskeleton remodeling. Different types of STRIPAK complexes are involved in a variety of biological processes such as cell growth, differentiation, apoptosis, metabolism and immune regulation. The chain is Striatin-interacting protein 1 (STRIP1) from Pongo abelii (Sumatran orangutan).